The following is a 117-amino-acid chain: Large ribosomal subunit protein uL18 (117 aa).

This sequence belongs to the universal ribosomal protein uL18 family. As to quaternary structure, part of the 50S ribosomal subunit; part of the 5S rRNA/L5/L18/L25 subcomplex. Contacts the 5S and 23S rRNAs.

This is one of the proteins that bind and probably mediate the attachment of the 5S RNA into the large ribosomal subunit, where it forms part of the central protuberance. This chain is Large ribosomal subunit protein uL18, found in Vibrio campbellii (strain ATCC BAA-1116).